A 127-amino-acid polypeptide reads, in one-letter code: Glycine cleavage system H protein (127 aa).

Residues 24 to 105 (TALVGITDFA…YGSGWMVKMK (82 aa)) enclose the Lipoyl-binding domain. Lys65 is subject to N6-lipoyllysine.

Belongs to the GcvH family. In terms of assembly, the glycine cleavage system is composed of four proteins: P, T, L and H. It depends on (R)-lipoate as a cofactor.

In terms of biological role, the glycine cleavage system catalyzes the degradation of glycine. The H protein shuttles the methylamine group of glycine from the P protein to the T protein. The protein is Glycine cleavage system H protein of Chlorobium luteolum (strain DSM 273 / BCRC 81028 / 2530) (Pelodictyon luteolum).